The sequence spans 1108 residues: Mediator of RNA polymerase II transcription subunit 14 (1108 aa).

Disordered stretches follow at residues 1-30, 35-54, and 1048-1108; these read MAAV…GGDT, SSEI…DNPL, and QQQR…VDLT. Residues 35 to 52 show a composition bias toward polar residues; sequence SSEIVQQQTPARSLQSDN. Residues 1048 to 1080 show a composition bias toward low complexity; sequence QQQRQPVVQPGQQPQVQNQANGVMNRGPQRPGL.

The protein belongs to the Mediator complex subunit 14 family. Component of the Mediator complex.

The protein localises to the nucleus. Functionally, component of the Mediator complex, a coactivator involved in the regulated transcription of nearly all RNA polymerase II-dependent genes. Mediator functions as a bridge to convey information from gene-specific regulatory proteins to the basal RNA polymerase II transcription machinery. Mediator is recruited to promoters by direct interactions with regulatory proteins and serves as a scaffold for the assembly of a functional preinitiation complex with RNA polymerase II and the general transcription factors. In Pyricularia oryzae (strain 70-15 / ATCC MYA-4617 / FGSC 8958) (Rice blast fungus), this protein is Mediator of RNA polymerase II transcription subunit 14 (RGR1).